An 819-amino-acid polypeptide reads, in one-letter code: Pentatricopeptide repeat-containing protein At5g02860 (819 aa).

Residues 57–93 are disordered; it reads QNPNSRQPISSQTSRNRNRTRIGKSRDPNLGKPWSYH. 18 PPR repeats span residues 172-206, 207-241, 242-277, 278-312, 313-347, 348-382, 383-417, 418-452, 453-487, 488-522, 523-557, 558-592, 593-627, 628-662, 663-697, 698-732, 733-767, and 768-802; these read DNSVVAIIISMLGKEGRVSSAANMFNGLQEDGFSL, DVYSYTSLISAFANSGRYREAVNVFKKMEEDGCKP, TLITYNVILNVFGKMGTPWNKITSLVEKMKSDGIAP, DAYTYNTLITCCKRGSLHQEAAQVFEEMKAAGFSY, DKVTYNALLDVYGKSHRPKEAMKVLNEMVLNGFSP, SIVTYNSLISAYARDGMLDEAMELKNQMAEKGTKP, DVFTYTTLLSGFERAGKVESAMSIFEEMRNAGCKP, NICTFNAFIKMYGNRGKFTEMMKIFDEINVCGLSP, DIVTWNTLLAVFGQNGMDSEVSGVFKEMKRAGFVP, ERETFNTLISAYSRCGSFEQAMTVYRRMLDAGVTP, DLSTYNTVLAALARGGMWEQSEKVLAEMEDGRCKP, NELTYCSLLHAYANGKEIGLMHSLAEEVYSGVIEP, RAVLLKTLVLVCSKCDLLPEAERAFSELKERGFSP, DITTLNSMVSIYGRRQMVAKANGVLDYMKERGFTP, SMATYNSLMYMHSRSADFGKSEEILREILAKGIKP, DIISYNTVIYAYCRNTRMRDASRIFSEMRNSGIVP, DVITYNTFIGSYAADSMFEEAIGVVRYMIKHGCRP, and NQNTYNSIVDGYCKLNRKDEAKLFVEDLRNLDPHA.

The protein belongs to the PPR family. P subfamily.

The polypeptide is Pentatricopeptide repeat-containing protein At5g02860 (Arabidopsis thaliana (Mouse-ear cress)).